A 320-amino-acid polypeptide reads, in one-letter code: 1-aminocyclopropane-1-carboxylate oxidase 3 (320 aa).

Positions 154–254 constitute a Fe2OG dioxygenase domain; sequence PNFGTKVSNY…RMSIASFYNP (101 aa). Fe cation-binding residues include His-178, Asp-180, and His-235.

The protein belongs to the iron/ascorbate-dependent oxidoreductase family. Requires Fe cation as cofactor. In terms of tissue distribution, flowers.

It catalyses the reaction 1-aminocyclopropane-1-carboxylate + L-ascorbate + O2 = ethene + L-dehydroascorbate + hydrogen cyanide + CO2 + 2 H2O. It participates in alkene biosynthesis; ethylene biosynthesis via S-adenosyl-L-methionine; ethylene from S-adenosyl-L-methionine: step 2/2. The polypeptide is 1-aminocyclopropane-1-carboxylate oxidase 3 (ACO3) (Cucumis melo (Muskmelon)).